Reading from the N-terminus, the 127-residue chain is Major sperm protein 10/36/56/76 (127 aa).

An N-acetylalanine modification is found at A2. The region spanning 9-126 is the MSP domain; the sequence is DIQTQPNAKI…RRKNLPIEYN (118 aa).

As to expression, sperm.

The protein resides in the cell projection. It is found in the pseudopodium. Its subcellular location is the cytoplasm. The protein localises to the cytoskeleton. Its function is as follows. Central component in molecular interactions underlying sperm crawling. Forms an extensive filament system that extends from sperm villipoda, along the leading edge of the pseudopod. The chain is Major sperm protein 10/36/56/76 (msp-10) from Caenorhabditis elegans.